The following is a 116-amino-acid chain: T-cell leukemia/lymphoma protein 1A (116 aa).

The protein belongs to the TCL1 family. In terms of assembly, homodimer. Interacts with AKT1, AKT2 and AKT3 (via PH domain). Interacts with PNPT1; the interaction has no effect on PNPT1 exonuclease activity.

It localises to the cytoplasm. It is found in the nucleus. The protein localises to the microsome. The protein resides in the endoplasmic reticulum. Functionally, enhances the phosphorylation and activation of AKT1 and AKT2. Enhances cell proliferation, stabilizes mitochondrial membrane potential and promotes cell survival. This chain is T-cell leukemia/lymphoma protein 1A (Tcl1a), found in Mus musculus (Mouse).